Reading from the N-terminus, the 155-residue chain is Small ribosomal subunit protein uS7 (155 aa).

It belongs to the universal ribosomal protein uS7 family. As to quaternary structure, part of the 30S ribosomal subunit. Contacts proteins S9 and S11.

One of the primary rRNA binding proteins, it binds directly to 16S rRNA where it nucleates assembly of the head domain of the 30S subunit. Is located at the subunit interface close to the decoding center, probably blocks exit of the E-site tRNA. The protein is Small ribosomal subunit protein uS7 of Corynebacterium efficiens (strain DSM 44549 / YS-314 / AJ 12310 / JCM 11189 / NBRC 100395).